The following is a 324-amino-acid chain: Calpain-2 catalytic subunit (324 aa).

Positions 1–138 (YPNTFWMNPQ…KKADYQVVDD (138 aa)) are domain III. Residues 139–153 (EIEADLEENDASEDD) form a linker region. A domain IV region spans residues 158-324 (FRRLFAQLAG…LISWLCFSVL (167 aa)). Residues Ala166, Asp169, Glu171, Glu176, Asp209, Asp211, Ser213, Lys215, Glu220, Asp239, Asp241, Ser243, Thr245, Glu250, Asp282, and Asn285 each contribute to the Ca(2+) site. 2 consecutive EF-hand domains span residues 190-224 (DIKSDGFSIETCRIMVDMLDSDGSAKLGLKEFYIL) and 226-261 (TKIQKYQKIYREIDVDRSGTMNSYEMRKALEEAGFK).

Belongs to the peptidase C2 family. Forms a heterodimer with a small (regulatory) subunit (CAPNS1). Interacts with CPEB3; this leads to cleavage of CPEB3. Ca(2+) serves as cofactor. Ubiquitous.

The protein localises to the cytoplasm. The protein resides in the cell membrane. The catalysed reaction is Broad endopeptidase specificity.. Its activity is regulated as follows. Activated by 200-1000 micromolar concentrations of calcium and inhibited by calpastatin. Calcium-regulated non-lysosomal thiol-protease which catalyzes limited proteolysis of substrates involved in cytoskeletal remodeling and signal transduction. Proteolytically cleaves MYOC at 'Arg-226'. Proteolytically cleaves CPEB3 following neuronal stimulation which abolishes CPEB3 translational repressor activity, leading to translation of CPEB3 target mRNAs. The polypeptide is Calpain-2 catalytic subunit (CAPN2) (Sus scrofa (Pig)).